The chain runs to 317 residues: Acetyl-coenzyme A carboxylase carboxyl transferase subunit alpha (317 aa).

In terms of domain architecture, CoA carboxyltransferase C-terminal spans 33–294 (NINKEINCLR…KNRILKDLKE (262 aa)).

Belongs to the AccA family. As to quaternary structure, acetyl-CoA carboxylase is a heterohexamer composed of biotin carboxyl carrier protein (AccB), biotin carboxylase (AccC) and two subunits each of ACCase subunit alpha (AccA) and ACCase subunit beta (AccD).

The protein resides in the cytoplasm. It carries out the reaction N(6)-carboxybiotinyl-L-lysyl-[protein] + acetyl-CoA = N(6)-biotinyl-L-lysyl-[protein] + malonyl-CoA. It participates in lipid metabolism; malonyl-CoA biosynthesis; malonyl-CoA from acetyl-CoA: step 1/1. In terms of biological role, component of the acetyl coenzyme A carboxylase (ACC) complex. First, biotin carboxylase catalyzes the carboxylation of biotin on its carrier protein (BCCP) and then the CO(2) group is transferred by the carboxyltransferase to acetyl-CoA to form malonyl-CoA. This is Acetyl-coenzyme A carboxylase carboxyl transferase subunit alpha from Wigglesworthia glossinidia brevipalpis.